The sequence spans 500 residues: Cytochrome P450 726A27 (500 aa).

Residues 7–27 traverse the membrane as a helical; Signal-anchor for type II membrane protein segment; the sequence is IPSYPIIFSFFIFIFMLIKIW. Cys440 lines the heme pocket.

It belongs to the cytochrome P450 family. Requires heme as cofactor. In terms of tissue distribution, expressed in mature seeds.

The protein resides in the membrane. The catalysed reaction is (-)-casbene + reduced [NADPH--hemoprotein reductase] + O2 = 4-hydroxycasbene + oxidized [NADPH--hemoprotein reductase] + H2O + H(+). It catalyses the reaction 8-hydroxycasbene + reduced [NADPH--hemoprotein reductase] + O2 = 4,8-dihydroxycasbene + oxidized [NADPH--hemoprotein reductase] + H2O + H(+). The enzyme catalyses 4,8-dihydroxycasbene + reduced [NADPH--hemoprotein reductase] + O2 = 4,5,8-trihydroxycasbene + oxidized [NADPH--hemoprotein reductase] + H2O + H(+). The protein operates within secondary metabolite biosynthesis; terpenoid biosynthesis. In terms of biological role, involved in the biosynthesis of macrocyclic lathyrane type diterpenoids (also called Euphorbia factors) natural products, including the cyclization route from casbene to jolkinol C, a precursor for ingenol mebutate that is used to treat actinic keratosis, a precancerous skin condition. Catalyzes the hydroxylation of (-)-casbene and 8-hydroxycasbene to produce 4-hydroxycasbene and 4,8-dihydroxycasbene, respectively. In Euphorbia lathyris (Caper spurge), this protein is Cytochrome P450 726A27.